The chain runs to 422 residues: UDP-N-acetylglucosamine 1-carboxyvinyltransferase (422 aa).

22 to 23 (KN) contacts phosphoenolpyruvate. Arginine 94 is a UDP-N-acetyl-alpha-D-glucosamine binding site. The active-site Proton donor is cysteine 118. A 2-(S-cysteinyl)pyruvic acid O-phosphothioketal modification is found at cysteine 118. UDP-N-acetyl-alpha-D-glucosamine contacts are provided by residues 123–127 (RPVDL), aspartate 308, and isoleucine 330.

Belongs to the EPSP synthase family. MurA subfamily.

It is found in the cytoplasm. It carries out the reaction phosphoenolpyruvate + UDP-N-acetyl-alpha-D-glucosamine = UDP-N-acetyl-3-O-(1-carboxyvinyl)-alpha-D-glucosamine + phosphate. The protein operates within cell wall biogenesis; peptidoglycan biosynthesis. Functionally, cell wall formation. Adds enolpyruvyl to UDP-N-acetylglucosamine. The polypeptide is UDP-N-acetylglucosamine 1-carboxyvinyltransferase (Dinoroseobacter shibae (strain DSM 16493 / NCIMB 14021 / DFL 12)).